Reading from the N-terminus, the 254-residue chain is rRNA N-glycosylase sapovaccarin-S2 (254 aa).

The protein belongs to the ribosome-inactivating protein family. Type 1 RIP subfamily. Expressed in seeds; most abundant in the perisperm.

The enzyme catalyses Endohydrolysis of the N-glycosidic bond at one specific adenosine on the 28S rRNA.. Exhibits N-glycosylase activity. Catalyzes the release of one adenine from a ribosome. Acts as a ribosome-inactivating protein and inhibits protein synthesis. Induces cell death in Huh-7 liver cells. May contribute to the protection against plant pests and predators or play a role in regulating the death of plant cells. The polypeptide is rRNA N-glycosylase sapovaccarin-S2 (Gypsophila vaccaria (Cow soapwort)).